A 359-amino-acid polypeptide reads, in one-letter code: ELAV-like protein 2 (359 aa).

A disordered region spans residues 1–33; the sequence is METQLSNGPTCNNTANGPTTINNNCSSPVDSGN. 2 RRM domains span residues 39 to 117 and 125 to 205; these read TNLI…YARP and ANLY…FANN. A Phosphoserine modification is found at S221. One can recognise an RRM 3 domain in the interval 276 to 354; that stretch reads WCIFVYNLAP…RVLQVSFKTN (79 aa).

Belongs to the RRM elav family. As to quaternary structure, interacts with IGF2BP1. Interacts with MAP1B light chain LC1.

Its function is as follows. RNA-binding protein that binds to the 3' untranslated region (3'UTR) of target mRNAs. Seems to recognize a GAAA motif. Can bind to its own 3'UTR, the FOS 3'UTR and the ID 3'UTR. The sequence is that of ELAV-like protein 2 (ELAVL2) from Pongo abelii (Sumatran orangutan).